Consider the following 848-residue polypeptide: Translation initiation factor IF-2 (848 aa).

Positions 90-253 (RTYIKRAELQ…PKEKRHAFER (164 aa)) are disordered. The segment covering 105-170 (EAPAPEEPVQ…SAEPAIAPED (66 aa)) has biased composition (low complexity). Basic residues-rich tracts occupy residues 204 to 215 (PKKKQAGHRGPR) and 236 to 248 (KPLRAKKKPKEKR). One can recognise a tr-type G domain in the interval 344–511 (KRAPVVSVMG…AVLLQAEILE (168 aa)). Residues 353 to 360 (GHVDHGKT) are G1. Residue 353-360 (GHVDHGKT) participates in GTP binding. Residues 378 to 382 (GITQH) are G2. The interval 399 to 402 (DTPG) is G3. Residues 399–403 (DTPGH) and 453–456 (NKMD) each bind GTP. The interval 453-456 (NKMD) is G4. Residues 489–491 (SAH) are G5.

It belongs to the TRAFAC class translation factor GTPase superfamily. Classic translation factor GTPase family. IF-2 subfamily.

Its subcellular location is the cytoplasm. Its function is as follows. One of the essential components for the initiation of protein synthesis. Protects formylmethionyl-tRNA from spontaneous hydrolysis and promotes its binding to the 30S ribosomal subunits. Also involved in the hydrolysis of GTP during the formation of the 70S ribosomal complex. The chain is Translation initiation factor IF-2 from Marinobacter nauticus (strain ATCC 700491 / DSM 11845 / VT8) (Marinobacter aquaeolei).